The sequence spans 218 residues: Protein-L-isoaspartate O-methyltransferase (218 aa).

S69 is an active-site residue.

Belongs to the methyltransferase superfamily. L-isoaspartyl/D-aspartyl protein methyltransferase family.

It localises to the cytoplasm. The catalysed reaction is [protein]-L-isoaspartate + S-adenosyl-L-methionine = [protein]-L-isoaspartate alpha-methyl ester + S-adenosyl-L-homocysteine. Its function is as follows. Catalyzes the methyl esterification of L-isoaspartyl residues in peptides and proteins that result from spontaneous decomposition of normal L-aspartyl and L-asparaginyl residues. It plays a role in the repair and/or degradation of damaged proteins. In Aromatoleum aromaticum (strain DSM 19018 / LMG 30748 / EbN1) (Azoarcus sp. (strain EbN1)), this protein is Protein-L-isoaspartate O-methyltransferase.